The chain runs to 98 residues: NADH-ubiquinone oxidoreductase chain 4L (98 aa).

Transmembrane regions (helical) follow at residues 2-22 (PFIY…LLLF), 30-50 (LLCL…TTLG), and 61-81 (IILM…LVTI).

The protein belongs to the complex I subunit 4L family. As to quaternary structure, core subunit of respiratory chain NADH dehydrogenase (Complex I) which is composed of 45 different subunits.

The protein resides in the mitochondrion inner membrane. It carries out the reaction a ubiquinone + NADH + 5 H(+)(in) = a ubiquinol + NAD(+) + 4 H(+)(out). Core subunit of the mitochondrial membrane respiratory chain NADH dehydrogenase (Complex I) which catalyzes electron transfer from NADH through the respiratory chain, using ubiquinone as an electron acceptor. Part of the enzyme membrane arm which is embedded in the lipid bilayer and involved in proton translocation. In Bradypus tridactylus (Pale-throated three-toed sloth), this protein is NADH-ubiquinone oxidoreductase chain 4L (MT-ND4L).